An 87-amino-acid polypeptide reads, in one-letter code: U3-theraphotoxin-Cg1c (87 aa).

Residues 1-23 form the signal peptide; the sequence is MRTFTLIAILTCAVLVIFHVSAA. Residues 24–51 constitute a propeptide that is removed on maturation; sequence EELEAQDVIQPEDIFTGVATLEEDRIFE. Intrachain disulfides connect Cys52–Cys65, Cys56–Cys79, and Cys73–Cys84.

The protein belongs to the neurotoxin 12 (Hwtx-2) family. 03 (juruin) subfamily. Expressed by the venom gland.

The protein resides in the secreted. Its function is as follows. Probable ion channel inhibitor. This Chilobrachys guangxiensis (Chinese earth tiger tarantula) protein is U3-theraphotoxin-Cg1c.